Reading from the N-terminus, the 196-residue chain is MIPVVIEQTSRGERSYDIYSRLLKDRIIMLTGPVEDNMANSVIAQLLFLDAQDNTKDIYLYVNTPGGSVSAGLAIVDTMNFIKADVQTIVMGMAASMGTVIASSGAKGKRFMLPNAEYMIHQPMGGTGGGTQQTDMAIAAEHLLKTRHRLEKILAQNAGKTIKQIHKDAERDYWMSAEETLAYGFIDEIMENNELA.

Ser96 functions as the Nucleophile in the catalytic mechanism. Residue His121 is part of the active site.

The protein belongs to the peptidase S14 family. As to quaternary structure, fourteen ClpP subunits assemble into 2 heptameric rings which stack back to back to give a disk-like structure with a central cavity, resembling the structure of eukaryotic proteasomes.

It is found in the cytoplasm. It catalyses the reaction Hydrolysis of proteins to small peptides in the presence of ATP and magnesium. alpha-casein is the usual test substrate. In the absence of ATP, only oligopeptides shorter than five residues are hydrolyzed (such as succinyl-Leu-Tyr-|-NHMec, and Leu-Tyr-Leu-|-Tyr-Trp, in which cleavage of the -Tyr-|-Leu- and -Tyr-|-Trp bonds also occurs).. In terms of biological role, cleaves peptides in various proteins in a process that requires ATP hydrolysis. Has a chymotrypsin-like activity. Plays a major role in the degradation of misfolded proteins. The polypeptide is ATP-dependent Clp protease proteolytic subunit (Streptococcus equi subsp. zooepidemicus (strain H70)).